The following is a 229-amino-acid chain: Ribonuclease 3 (229 aa).

The RNase III domain maps to 7-132 (LRAFESRIGH…VIAAVYLDAG (126 aa)). Residue glutamate 45 coordinates Mg(2+). Residue aspartate 49 is part of the active site. Positions 118 and 121 each coordinate Mg(2+). The active site involves glutamate 121. Positions 157–226 (DAKTALQEWA…ARALLARMEA (70 aa)) constitute a DRBM domain.

This sequence belongs to the ribonuclease III family. As to quaternary structure, homodimer. Mg(2+) serves as cofactor.

It localises to the cytoplasm. The enzyme catalyses Endonucleolytic cleavage to 5'-phosphomonoester.. In terms of biological role, digests double-stranded RNA. Involved in the processing of primary rRNA transcript to yield the immediate precursors to the large and small rRNAs (23S and 16S). Processes some mRNAs, and tRNAs when they are encoded in the rRNA operon. Processes pre-crRNA and tracrRNA of type II CRISPR loci if present in the organism. This chain is Ribonuclease 3, found in Cereibacter sphaeroides (strain ATCC 17025 / ATH 2.4.3) (Rhodobacter sphaeroides).